The chain runs to 92 residues: Small ribosomal subunit protein uS19c (92 aa).

It belongs to the universal ribosomal protein uS19 family.

It is found in the plastid. The protein localises to the chloroplast. In terms of biological role, protein S19 forms a complex with S13 that binds strongly to the 16S ribosomal RNA. In Amborella trichopoda, this protein is Small ribosomal subunit protein uS19c.